An 82-amino-acid chain; its full sequence is P2Y purinoceptor 2 (82 aa).

The chain crosses the membrane as a helical span at residues 1–25; sequence LPLSYGVVCVLGLCLNVVALYIFLC. At 26-35 the chain is on the cytoplasmic side; it reads RLKTWNASTT. The helical transmembrane segment at 36 to 56 threads the bilayer; it reads YMFHLAVSDSLYAASLPLLVY. Residues 57 to 75 lie on the Extracellular side of the membrane; it reads YYAQGDHWPFSTVLCKLVR. The chain crosses the membrane as a helical span at residues 76 to 82; the sequence is FLFYTNL.

Belongs to the G-protein coupled receptor 1 family. As to expression, expressed in brain, heart, stria vascularis and vestibular labyrinth.

It localises to the cell membrane. Receptor for ATP and UTP coupled to G-proteins that activate a phosphatidylinositol-calcium second messenger system. Not activated by UDP. The chain is P2Y purinoceptor 2 (P2RY2) from Meriones unguiculatus (Mongolian jird).